Reading from the N-terminus, the 495-residue chain is uncharacterized protein (495 aa).

Helical transmembrane passes span 43-63 (IIIS…MPSI), 75-95 (TLVV…PLIF), 106-126 (PLNI…ALSV), 128-148 (LAMF…GLGI), 168-188 (IYFL…GFIA), 196-216 (WEFW…VVFL), 284-304 (PIMI…YLLF), 323-343 (GLTY…LLPL), 366-386 (PMAF…GWTV), 390-410 (VFWF…VMTF), 426-446 (ASAM…FPLF), and 461-481 (SLLA…YMFG).

Belongs to the major facilitator superfamily. CAR1 family.

Its subcellular location is the membrane. This is an uncharacterized protein from Schizosaccharomyces pombe (strain 972 / ATCC 24843) (Fission yeast).